We begin with the raw amino-acid sequence, 551 residues long: MKEVIMKYVVQNAAKYGKASEKAVMGKVMAENPELRKKAKEVLELVKECITEFEALSEEVRKELIKKYSMDSEAKRELETKKLPELEGAEKGKVVMRFAPNPNGPPTLGSARGIIVNGEYAKMYEGKYIIRFDDTDPRTKRPMIEAYEWYLEDIEWLGYKPDEVIYASRRIPIYYDYARKLIEMGKAYTCFCSQEEFKKFRDSGEECPHRNISVEDTLEVWERMLEGDYEEGEVVLRIKTDMRHKDPAIRDWVAFRIIKESHPLVGDKYVVYPTLDFESAIEDHLLGITHIIRGKDLIDSERRQRYIYEYFGWIYPITKHWGRVKIFEFGKLSTSSIKKDIERGKYEGWDDPRLPTLRAFRRRGFEPEAIKSFFLSLGVGENDVSVSLKNLYAENRKIIDRKANRYFFIWGPVKIEIVNLPEKKEVELPLNPHTGEKRRLKGERTIYVTKDDFERLKGQVVRLKDFCNVLLDEKAEFMGFELEGVKKGKNIIHWLPESEAIKGKVIGEREAEGLVERNAVRDVGKVVQFERFAFCKVESADEELVAVYTHP.

Residues 100–110 carry the 'HIGH' region motif; that stretch reads PNPNGPPTLGS.

Belongs to the class-I aminoacyl-tRNA synthetase family. Glutamate--tRNA ligase type 2 subfamily.

The protein resides in the cytoplasm. The catalysed reaction is tRNA(Glu) + L-glutamate + ATP = L-glutamyl-tRNA(Glu) + AMP + diphosphate. Catalyzes the attachment of glutamate to tRNA(Glu) in a two-step reaction: glutamate is first activated by ATP to form Glu-AMP and then transferred to the acceptor end of tRNA(Glu). The protein is Glutamate--tRNA ligase of Archaeoglobus fulgidus (strain ATCC 49558 / DSM 4304 / JCM 9628 / NBRC 100126 / VC-16).